A 177-amino-acid polypeptide reads, in one-letter code: Ribulose bisphosphate carboxylase small subunit, chloroplastic (177 aa).

A chloroplast-targeting transit peptide spans 1–55; the sequence is MASLMSNAAVVTASTAAQANMVAPFSGLKSTSAFPVSRKSNVDITSLATNGGRVN.

The protein belongs to the RuBisCO small chain family. As to quaternary structure, heterohexadecamer of 8 large and 8 small subunits.

It is found in the plastid. Its subcellular location is the chloroplast. RuBisCO catalyzes two reactions: the carboxylation of D-ribulose 1,5-bisphosphate, the primary event in carbon dioxide fixation, as well as the oxidative fragmentation of the pentose substrate. Both reactions occur simultaneously and in competition at the same active site. Although the small subunit is not catalytic it is essential for maximal activity. The chain is Ribulose bisphosphate carboxylase small subunit, chloroplastic from Silene latifolia subsp. alba (White campion).